The primary structure comprises 681 residues: T-box-containing protein 2 (681 aa).

A DNA-binding region (T-box) is located at residues 149–323; that stretch reads LWDQFSRAGT…NNPFAKGFRE (175 aa). Disordered stretches follow at residues 316–351, 456–489, 521–558, and 589–611; these read PFAK…EQRR, GITS…NQSN, PNIN…LIPG, and ESGE…CQSG. Positions 470–489 are enriched in low complexity; it reads NSFTYYNSSSPSSSDSNQSN. Residues 521–534 show a composition bias toward polar residues; sequence PNINIPNTVETNVH.

As to quaternary structure, monomer. As to expression, differentiating muscle and tailbud tip.

The protein resides in the nucleus. Functionally, involved in the transcriptional regulation of genes required for muscle differentiation. Binds to a palindromic site (called T site) and activates gene transcription when bound to such a site. The polypeptide is T-box-containing protein 2 (T2) (Halocynthia roretzi (Sea squirt)).